The primary structure comprises 247 residues: MRILVTNDDGIQSKGIIILAELLSEEHDVFVVAPDKERSATGHSITIHVPLWIKKVFISERVVAYSTTGTPADCVKLAYNVIMDKKVDLIVSGVNRGPNMGMDILYSGTVSGAMEGAMMNIPSIAISSANYESPDFEGAARFLIDFLKEFDFSLLDPFTMLNINVPAGEIKGWKFTRQSRRRWNDYFEERVSPFGEKYYWMMGEVIEDDDRDDVDYKAVREGYVSITPIHPFLTNERCLKKLREVYD.

A divalent metal cation-binding residues include Asp-8, Asp-9, Ser-39, and Asn-95.

The protein belongs to the SurE nucleotidase family. Requires a divalent metal cation as cofactor.

The protein localises to the cytoplasm. It catalyses the reaction a ribonucleoside 5'-phosphate + H2O = a ribonucleoside + phosphate. Nucleotidase that shows phosphatase activity on nucleoside 5'-monophosphates. The chain is 5'-nucleotidase SurE from Thermotoga petrophila (strain ATCC BAA-488 / DSM 13995 / JCM 10881 / RKU-1).